The primary structure comprises 642 residues: Threonine--tRNA ligase (642 aa).

Positions 1–61 (MPVITLPDGS…ENDAQLSIIT (61 aa)) constitute a TGS domain. A catalytic region spans residues 243–534 (DHRKIGKQLD…LTEEFAGFFP (292 aa)). Lysine 286 is subject to N6-acetyllysine. The Zn(2+) site is built by cysteine 334, histidine 385, and histidine 511.

Belongs to the class-II aminoacyl-tRNA synthetase family. In terms of assembly, homodimer. Requires Zn(2+) as cofactor.

It is found in the cytoplasm. The catalysed reaction is tRNA(Thr) + L-threonine + ATP = L-threonyl-tRNA(Thr) + AMP + diphosphate + H(+). Catalyzes the attachment of threonine to tRNA(Thr) in a two-step reaction: L-threonine is first activated by ATP to form Thr-AMP and then transferred to the acceptor end of tRNA(Thr). Also edits incorrectly charged L-seryl-tRNA(Thr). The sequence is that of Threonine--tRNA ligase from Shigella boydii serotype 18 (strain CDC 3083-94 / BS512).